Reading from the N-terminus, the 390-residue chain is Protein arginine N-methyltransferase 1.1 (390 aa).

Basic and acidic residues predominate over residues 1 to 10 (MTKNSNHDEN). Residues 1-59 (MTKNSNHDENEFISFEPNQNTKIRFEDADEDEVAEGSGVAGEETPQDESMFDAGESADT) form a disordered region. Positions 69–390 (ADYYFDSYSH…ISRTQHYKMR (322 aa)) constitute an SAM-dependent MTase PRMT-type domain. Residues glutamate 181 and glutamate 190 contribute to the active site.

This sequence belongs to the class I-like SAM-binding methyltransferase superfamily. Protein arginine N-methyltransferase family. As to quaternary structure, interacts with PRMT12, MBD7 and FIB2.

The protein resides in the nucleus. It is found in the cytoplasm. It carries out the reaction L-arginyl-[protein] + 2 S-adenosyl-L-methionine = N(omega),N(omega)-dimethyl-L-arginyl-[protein] + 2 S-adenosyl-L-homocysteine + 2 H(+). In terms of biological role, methylates (mono and asymmetric dimethylation) the guanidino nitrogens of arginyl residues present in a glycine and arginine-rich domain. Type I arginine methyltransferase active on both histones and non-histone proteins. Required for leaves and flowers development. Mediates the methylation of MBD7 and MED36A. The protein is Protein arginine N-methyltransferase 1.1 (PRMT11) of Arabidopsis thaliana (Mouse-ear cress).